A 180-amino-acid polypeptide reads, in one-letter code: MEQPTSSTNGEKRKSPCESNNKKNDEMQEAPNRVLAPKQSLQKTKTIEYLTIIVYYYRKHTKINSNQLEKDQSRENSINPVQEEEDEGLDSAEGSSQEDEDLDSSEGSSQEDEDLDSSEGSSQEDEDLDSSEGSSQEDEDLDSSEGSSQEDEDLDPPEGSSQEDEDLDSSEGSSQEGGED.

Disordered stretches follow at residues methionine 1–threonine 46 and asparagine 64–aspartate 180. A compositionally biased stretch (basic and acidic residues) spans glycine 10–glutamate 26. Acidic residues predominate over residues glutamine 82–serine 169. The span at serine 170–aspartate 180 shows a compositional bias: low complexity.

It belongs to the SPAN-X family.

In Homo sapiens (Human), this protein is Sperm protein associated with the nucleus on the X chromosome N2 (SPANXN2).